The primary structure comprises 316 residues: PHD finger protein 20-like protein 1 (316 aa).

The 61-residue stretch at 11–71 (ITFEIGARLE…SNRLRPLERP (61 aa)) folds into the Tudor 1 domain. Glycyl lysine isopeptide (Lys-Gly) (interchain with G-Cter in SUMO2) cross-links involve residues K75 and K79. Residues 85–141 (FDFKAGEEVLARWTDCRYYPAKIEAINKEGTFTVQFYDGVIRCLKRMHIKAMPEDAK) form the Tudor 2 domain. The disordered stretch occupies residues 183–237 (AKNKTGNKPRTSANSNKDKEKDERKWFKVPSKKEETSTSITTPEVEKKEDLPTSS). Residues 186–197 (KTGNKPRTSANS) show a composition bias toward polar residues. The segment covering 198–218 (NKDKEKDERKWFKVPSKKEET) has biased composition (basic and acidic residues).

In terms of assembly, interacts with methylated DNMT1 (DNMT1K142me1). Interacts with SOX2.

It is found in the nucleus. Functionally, is a negative regulator of proteasomal degradation of a set of methylated proteins, including DNMT1 and SOX2. Involved in the maintainance of embryonic stem cells pluripotency, through the regulation of SOX2 levels. This chain is PHD finger protein 20-like protein 1 (PHF20L1), found in Bos taurus (Bovine).